A 288-amino-acid polypeptide reads, in one-letter code: RELT-like protein 1 (288 aa).

The signal sequence occupies residues 1 to 23 (MAPPAASGIPSIAPSLGPTAVWL). The Extracellular portion of the chain corresponds to 24–57 (GNRSDLGDVQALASRDLPTTTVTAGNNNKPEHLE). An N-linked (GlcNAc...) asparagine glycan is attached at Asn-25. Residues 58–78 (YVAFVLVPVFFIMGLLGILIC) form a helical membrane-spanning segment. The Cytoplasmic segment spans residues 79-288 (HVLKKKGYRC…EGTQERRSSE (210 aa)). Disordered stretches follow at residues 145–172 (FEPE…GAAS) and 237–288 (HKSN…RSSE). Positions 152–172 (SPNAPGSPTSPGSPLSPGAAS) are enriched in low complexity. The span at 237–246 (HKSNSKERKS) shows a compositional bias: basic and acidic residues.

It belongs to the RELT family.

Its subcellular location is the cell membrane. The protein is RELT-like protein 1 (RELL1) of Gallus gallus (Chicken).